A 921-amino-acid polypeptide reads, in one-letter code: Leucine--tRNA ligase (921 aa).

The 'HIGH' region motif lies at 80-90 (PYPSGKLHMGH). The short motif at 667–671 (KMSKS) is the 'KMSKS' region element. K670 contacts ATP.

It belongs to the class-I aminoacyl-tRNA synthetase family.

The protein resides in the cytoplasm. The catalysed reaction is tRNA(Leu) + L-leucine + ATP = L-leucyl-tRNA(Leu) + AMP + diphosphate. This Psychrobacter arcticus (strain DSM 17307 / VKM B-2377 / 273-4) protein is Leucine--tRNA ligase.